We begin with the raw amino-acid sequence, 177 residues long: Glutathione peroxidase homolog (177 aa).

The active site involves cysteine 35.

The protein belongs to the glutathione peroxidase family.

Its function is as follows. Important in the cellular metabolism or defense processes particular to this pathogen. This is Glutathione peroxidase homolog (gpxA) from Neisseria meningitidis serogroup A / serotype 4A (strain DSM 15465 / Z2491).